Here is a 1152-residue protein sequence, read N- to C-terminus: Fork-head transcriptional regulator FHL1 (1152 aa).

The tract at residues Thr55–Asn147 is disordered. The span at Ser64–Ala83 shows a compositional bias: basic and acidic residues. The segment covering Thr87–Ser101 has biased composition (low complexity). Positions Val126–Leu135 are enriched in polar residues. Residues Val171–Val229 form the FHA domain. Disordered stretches follow at residues Leu254 to Ser362 and Lys514 to Ser557. Residues Lys271 to Tyr286 show a composition bias toward polar residues. Residues Pro296 to Lys307 are compositionally biased toward basic residues. Residues Thr328–Ala358 are compositionally biased toward low complexity. Coiled-coil stretches lie at residues Asp449–Lys537 and Glu734–Leu777. Residues Lys659–Lys756 constitute a DNA-binding region (fork-head). 4 disordered regions span residues Ala787 to Pro833, Arg846 to Pro867, His951 to Gln1010, and Pro1057 to Glu1152. Composition is skewed to low complexity over residues Ser804 to Thr826, Thr851 to Ala863, and Thr973 to Gln987. Composition is skewed to pro residues over residues Val996–Gln1006 and Thr1072–Ser1082. Composition is skewed to polar residues over residues Ser1115 to Pro1128 and Gln1143 to Glu1152.

In terms of assembly, interacts with IFH1 and TBF1.

It localises to the nucleus. In terms of biological role, in complex with IFH1, acts as a transcriptional regulator of rRNA and ribosomal protein genes. The FHL1-IFH1 complex is targeted to the ribosomal protein genes by the DNA-binding factor TBF1. The chain is Fork-head transcriptional regulator FHL1 (FHL1) from Candida albicans (strain SC5314 / ATCC MYA-2876) (Yeast).